We begin with the raw amino-acid sequence, 147 residues long: D-aminoacyl-tRNA deacylase (147 aa).

The Gly-cisPro motif, important for rejection of L-amino acids signature appears at 136–137; sequence GP.

Belongs to the DTD family. Homodimer.

Its subcellular location is the cytoplasm. It carries out the reaction glycyl-tRNA(Ala) + H2O = tRNA(Ala) + glycine + H(+). The catalysed reaction is a D-aminoacyl-tRNA + H2O = a tRNA + a D-alpha-amino acid + H(+). Functionally, an aminoacyl-tRNA editing enzyme that deacylates mischarged D-aminoacyl-tRNAs. Also deacylates mischarged glycyl-tRNA(Ala), protecting cells against glycine mischarging by AlaRS. Acts via tRNA-based rather than protein-based catalysis; rejects L-amino acids rather than detecting D-amino acids in the active site. By recycling D-aminoacyl-tRNA to D-amino acids and free tRNA molecules, this enzyme counteracts the toxicity associated with the formation of D-aminoacyl-tRNA entities in vivo and helps enforce protein L-homochirality. The sequence is that of D-aminoacyl-tRNA deacylase from Streptococcus dysgalactiae subsp. equisimilis (Streptococcus equisimilis).